Here is a 313-residue protein sequence, read N- to C-terminus: Porphobilinogen deaminase (313 aa).

Position 242 is an S-(dipyrrolylmethanemethyl)cysteine (Cys242).

Belongs to the HMBS family. Monomer. Dipyrromethane is required as a cofactor.

It catalyses the reaction 4 porphobilinogen + H2O = hydroxymethylbilane + 4 NH4(+). The protein operates within porphyrin-containing compound metabolism; protoporphyrin-IX biosynthesis; coproporphyrinogen-III from 5-aminolevulinate: step 2/4. In terms of biological role, tetrapolymerization of the monopyrrole PBG into the hydroxymethylbilane pre-uroporphyrinogen in several discrete steps. This Pectobacterium atrosepticum (strain SCRI 1043 / ATCC BAA-672) (Erwinia carotovora subsp. atroseptica) protein is Porphobilinogen deaminase.